Here is a 164-residue protein sequence, read N- to C-terminus: Ribosome maturation factor RimM (164 aa).

One can recognise a PRC barrel domain in the interval 93 to 164 (DSEYYVANLN…FVVIVPPEFI (72 aa)).

It belongs to the RimM family. As to quaternary structure, binds ribosomal protein uS19.

The protein resides in the cytoplasm. Its function is as follows. An accessory protein needed during the final step in the assembly of 30S ribosomal subunit, possibly for assembly of the head region. Essential for efficient processing of 16S rRNA. May be needed both before and after RbfA during the maturation of 16S rRNA. It has affinity for free ribosomal 30S subunits but not for 70S ribosomes. In Orientia tsutsugamushi (strain Boryong) (Rickettsia tsutsugamushi), this protein is Ribosome maturation factor RimM.